The primary structure comprises 424 residues: Probable methyltransferase EP424R (424 aa).

In terms of domain architecture, Adrift-type SAM-dependent 2'-O-MTase spans 103-315; sequence QIVTNAWLKM…TYIVGKNRLR (213 aa). 2 residues coordinate S-adenosyl-L-methionine: Gly-135 and Asp-228. Lys-268 acts as the Proton acceptor in catalysis.

It is found in the virion. The sequence is that of Probable methyltransferase EP424R from Ornithodoros (relapsing fever ticks).